A 70-amino-acid chain; its full sequence is Large ribosomal subunit protein bL31 (70 aa).

Lys8 carries the N6-acetyllysine modification. Positions 16, 18, 37, and 40 each coordinate Zn(2+).

Belongs to the bacterial ribosomal protein bL31 family. Type A subfamily. As to quaternary structure, part of the 50S ribosomal subunit. It depends on Zn(2+) as a cofactor.

Functionally, binds the 23S rRNA. The sequence is that of Large ribosomal subunit protein bL31 from Escherichia coli O6:K15:H31 (strain 536 / UPEC).